The primary structure comprises 395 residues: Phosphoglycerate kinase (395 aa).

Residues 21–23 (DFN), arginine 36, 59–62 (HLGR), arginine 120, and arginine 153 contribute to the substrate site. ATP-binding positions include lysine 203, glutamate 325, and 351-354 (GGDS).

This sequence belongs to the phosphoglycerate kinase family. As to quaternary structure, monomer.

It localises to the cytoplasm. The catalysed reaction is (2R)-3-phosphoglycerate + ATP = (2R)-3-phospho-glyceroyl phosphate + ADP. It participates in carbohydrate degradation; glycolysis; pyruvate from D-glyceraldehyde 3-phosphate: step 2/5. The protein is Phosphoglycerate kinase of Roseiflexus sp. (strain RS-1).